Here is a 278-residue protein sequence, read N- to C-terminus: Serine protease 57 (278 aa).

Residues 1 to 31 (MVPGTGGGRDCLTLVVATALTQLLWLPGCCG) form the signal peptide. The Peptidase S1 domain maps to 34-263 (IVGGHEVKPH…FVSWIWDVVR (230 aa)). A disulfide bridge links cysteine 59 with cysteine 75. Catalysis depends on charge relay system residues histidine 74 and aspartate 122. An N-linked (GlcNAc...) asparagine glycan is attached at asparagine 129. 3 cysteine pairs are disulfide-bonded: cysteine 157-cysteine 224, cysteine 188-cysteine 202, and cysteine 214-cysteine 239. Serine 218 acts as the Charge relay system in catalysis.

This sequence belongs to the peptidase S1 family. After cleavage of the signal peptide, the N-terminus is probably further processed by CTSC. Processing by CTSC is probably required for accumulation in cytoplasmic granules; in the absence of CTSC the protein does not accumulate. Post-translationally, N-glycosylated.

The protein localises to the cytoplasmic granule lumen. The protein resides in the secreted. Functionally, serine protease that cleaves preferentially after Arg residues. Can also cleave after citrulline (deimidated arginine) and methylarginine residues. The polypeptide is Serine protease 57 (Prss57) (Rattus norvegicus (Rat)).